The following is a 468-amino-acid chain: Cysteine--tRNA ligase (468 aa).

Cysteine 33 contributes to the Zn(2+) binding site. The 'HIGH' region signature appears at 35 to 45; the sequence is ATVQGLPHIGH. Residues cysteine 211, histidine 236, and glutamate 240 each coordinate Zn(2+). Positions 267–271 match the 'KMSKS' region motif; the sequence is KMSKS. Lysine 270 is a binding site for ATP.

Belongs to the class-I aminoacyl-tRNA synthetase family. Monomer. Requires Zn(2+) as cofactor.

It localises to the cytoplasm. The catalysed reaction is tRNA(Cys) + L-cysteine + ATP = L-cysteinyl-tRNA(Cys) + AMP + diphosphate. In Mycolicibacterium paratuberculosis (strain ATCC BAA-968 / K-10) (Mycobacterium paratuberculosis), this protein is Cysteine--tRNA ligase.